A 324-amino-acid chain; its full sequence is UDP-N-acetylenolpyruvoylglucosamine reductase (324 aa).

The FAD-binding PCMH-type domain occupies 36-203 (FRAGGLAELM…THAIFEGFPE (168 aa)). Arginine 183 is a catalytic residue. Catalysis depends on serine 232, which acts as the Proton donor. Glutamate 302 is an active-site residue.

This sequence belongs to the MurB family. It depends on FAD as a cofactor.

The protein localises to the cytoplasm. The enzyme catalyses UDP-N-acetyl-alpha-D-muramate + NADP(+) = UDP-N-acetyl-3-O-(1-carboxyvinyl)-alpha-D-glucosamine + NADPH + H(+). It participates in cell wall biogenesis; peptidoglycan biosynthesis. Cell wall formation. This is UDP-N-acetylenolpyruvoylglucosamine reductase from Sinorhizobium fredii (strain NBRC 101917 / NGR234).